The sequence spans 203 residues: Cold-regulated 413 plasma membrane protein 2 (203 aa).

Residues 1 to 43 lie on the Extracellular side of the membrane; the sequence is MGRMDYLAMKTDDVDTVALVNSDMEELKVAAKKLFSDVSKLGG. The chain crosses the membrane as a helical span at residues 44-64; that stretch reads LGFGVSFLKFLASFAAIYLLI. The Cytoplasmic portion of the chain corresponds to 65 to 74; sequence LDRTNWKTKM. The chain crosses the membrane as a helical span at residues 75-95; the sequence is LTSLLIPYIFLSLPSVIFNFL. The Extracellular portion of the chain corresponds to 96–98; it reads SGD. The helical transmembrane segment at 99–119 threads the bilayer; it reads VGKWIAFVAVVLRLFFPKHFP. Position 120 (D120) is a topological domain, cytoplasmic. A helical transmembrane segment spans residues 121–141; the sequence is WLEMPGSLILLLVVSPHFLAH. Residues 142–144 lie on the Extracellular side of the membrane; it reads HIR. A helical transmembrane segment spans residues 145–165; sequence GTWIGTVISLFIGCYLLQEHI. The Cytoplasmic portion of the chain corresponds to 166–179; sequence RASGGFRNSFTQPR. A helical transmembrane segment spans residues 180 to 200; that stretch reads GVSNTLGIILLLVYPVWALIV. The Extracellular portion of the chain corresponds to 201-203; the sequence is RVM.

Belongs to the Cold-regulated 413 protein family.

It localises to the cell membrane. This chain is Cold-regulated 413 plasma membrane protein 2 (COR413PM2), found in Arabidopsis thaliana (Mouse-ear cress).